Consider the following 342-residue polypeptide: MVMNKQIVLNNYINGSLKQSDLALRTSTICMEIPDGCNGAILVKNLYLSVNPYLILRMGKLDIPQFDSILPGSTIVSYGVSKVLDSTHPSYEKGELIWGSQAGWEEYTLIQNPYNLFKIQDKDVPLSYYVGILGMPGMTAYAGFFEICSPKKGETVFVTAAAGSVGQLVGQFAKMFGCYVVGSAGSKEKVDLLKNKFGFDDAFNYKEESDYDTALKRHFPEGIDIYFDNVGGKMLEAVINNMRVHGRIAVCGMVSQYSLKQPEGVHNLLKLIPKQIRMQGFVVVDYYHLYPKFLEMVLPRIKEGKVTYVEDISEGLESAPSALLGVYVGRNVGNQVVAVSRE.

Residues 163–166, K189, Y205, N229, 251–257, 281–283, and N331 contribute to the NADP(+) site; these read GSVG, CGMVSQY, and FVV.

This sequence belongs to the NADP-dependent oxidoreductase L4BD family.

It is found in the cytoplasm. The enzyme catalyses (2R,5R)-isomenthone + NADP(+) = (R)-pulegone + NADPH + H(+). The catalysed reaction is (1R,4S)-menthone + NADP(+) = (R)-pulegone + NADPH + H(+). The protein operates within secondary metabolite biosynthesis; terpenoid biosynthesis. Not inhibited by (+)-menthofuran. Monoterpene synthase that catalyzes the specific reduction of the 4,8-double bond of (+)-pulegone to produce both (-)-menthone and (+)-isomenthone in a 70:30 ratio. Unable to utilize either (-)-isopiperitenone or (+)-cis-isopulegone, or to catalyze the reverse reaction with (-)-menthone or (+)-isomenthone. Has an absolute requirement for NADPH. This chain is (+)-pulegone reductase, found in Mentha piperita (Peppermint).